The following is a 1052-amino-acid chain: Isoleucine--tRNA ligase (1052 aa).

Positions 58–68 (PFANGLPHYGH) match the 'HIGH' region motif. Positions 627 to 631 (KMSKS) match the 'KMSKS' region motif. Lys630 serves as a coordination point for ATP.

This sequence belongs to the class-I aminoacyl-tRNA synthetase family. IleS type 2 subfamily. Monomer. Zn(2+) is required as a cofactor.

It is found in the cytoplasm. The catalysed reaction is tRNA(Ile) + L-isoleucine + ATP = L-isoleucyl-tRNA(Ile) + AMP + diphosphate. Functionally, catalyzes the attachment of isoleucine to tRNA(Ile). As IleRS can inadvertently accommodate and process structurally similar amino acids such as valine, to avoid such errors it has two additional distinct tRNA(Ile)-dependent editing activities. One activity is designated as 'pretransfer' editing and involves the hydrolysis of activated Val-AMP. The other activity is designated 'posttransfer' editing and involves deacylation of mischarged Val-tRNA(Ile). This Corynebacterium diphtheriae (strain ATCC 700971 / NCTC 13129 / Biotype gravis) protein is Isoleucine--tRNA ligase.